A 138-amino-acid polypeptide reads, in one-letter code: Mediator of RNA polymerase II transcription subunit 22 (138 aa).

Residues 13 to 40 adopt a coiled-coil conformation; that stretch reads LKSYNSRLKEDIRSMRENFEEIIRLAKG.

This sequence belongs to the Mediator complex subunit 22 family. In terms of assembly, component of the Mediator complex.

It localises to the nucleus. Functionally, component of the Mediator complex, a coactivator involved in the regulated transcription of nearly all RNA polymerase II-dependent genes. Mediator functions as a bridge to convey information from gene-specific regulatory proteins to the basal RNA polymerase II transcription machinery. Mediator is recruited to promoters by direct interactions with regulatory proteins and serves as a scaffold for the assembly of a functional preinitiation complex with RNA polymerase II and the general transcription factors. This Anopheles gambiae (African malaria mosquito) protein is Mediator of RNA polymerase II transcription subunit 22 (MED22).